Here is a 22-residue protein sequence, read N- to C-terminus: Antimicrobial peptide 5 (22 aa).

Leu-22 is modified (leucine amide).

In terms of tissue distribution, skin.

It is found in the secreted. Has very strong antimicrobial activity against Gram-positive bacterium S.aureus, Gram-negative bacterium E.coli and yeast C.albicans. Has strong hemolytic activity against human red blood cells. In Xenopus tropicalis (Western clawed frog), this protein is Antimicrobial peptide 5.